The chain runs to 348 residues: Chemokine C-C motif receptor-like 2 (348 aa).

Over 1-43 (MANYTPAPEDDYDVFIEDDLSDDEIEPCTPYDPKILSAQLVPY) the chain is Extracellular. The chain crosses the membrane as a helical span at residues 44-64 (LYTTVFMVGLLDNILVVFILV). Over 65–76 (KYKGLRQAENMS) the chain is Cytoplasmic. A helical transmembrane segment spans residues 77 to 97 (FLNLALSNLGFLLTLPFWAYA). Over 98–110 (ASHGEGFDDPLCK) the chain is Extracellular. Cys109 and Cys187 are oxidised to a cystine. The helical transmembrane segment at 111-131 (ILLLLYSIGLYSEAFFNVLLT) threads the bilayer. Topologically, residues 132–150 (VQRYKEFFHVRRRFSACRT) are cytoplasmic. Residues 151-171 (VAGSIFISVLVWVTATLVTLP) traverse the membrane as a helical segment. The Extracellular segment spans residues 172-204 (ELVSYKPQMQSQKYKCFFTGLHFLPADETFWKH). The chain crosses the membrane as a helical span at residues 205-225 (FLTLKMNILGFLLPLFAFVYC). Topologically, residues 226–244 (YVRMRKTLQFRERNYGLFK) are cytoplasmic. The chain crosses the membrane as a helical span at residues 245 to 265 (LVFTIMAVFLLMWGPYNIVLF). Over 266-292 (LSAFNEHFSLHGCGSSYNLNKSVQITR) the chain is Extracellular. An N-linked (GlcNAc...) asparagine glycan is attached at Asn285. The chain crosses the membrane as a helical span at residues 293-313 (IIAATHCCVNPLLYVFLDKAF). Topologically, residues 314–348 (RKHLCHLFYLCSDTAPQPTEEPAQGASGEEYHLSS) are cytoplasmic.

Belongs to the G-protein coupled receptor 1 family.

The protein localises to the cell membrane. Its function is as follows. Receptor for CCL19 and chemerin/RARRES2. Does not appear to be a signaling receptor, but may have a role in modulating chemokine-triggered immune responses by capturing and internalizing CCL19 or by presenting RARRES2 ligand to CMKLR1, a functional signaling receptor. Plays a critical role for the development of Th2 responses. The polypeptide is Chemokine C-C motif receptor-like 2 (CCRL2) (Bos taurus (Bovine)).